Here is a 143-residue protein sequence, read N- to C-terminus: Large ribosomal subunit protein mL51 (143 aa).

A mitochondrion-targeting transit peptide spans 1 to 52 (MAALVRGLMRRVAALPQAVRSVSGGGQRHEPYRPLPITSPLAGLPRNFRVRE).

It belongs to the mitochondrion-specific ribosomal protein mL51 family. In terms of assembly, component of the mitochondrial ribosome large subunit (39S) which comprises a 16S rRNA and about 50 distinct proteins.

Its subcellular location is the mitochondrion. This is Large ribosomal subunit protein mL51 (MRPL51) from Gallus gallus (Chicken).